We begin with the raw amino-acid sequence, 428 residues long: Adenylosuccinate synthetase (428 aa).

Residues 12–18 and 40–42 each bind GTP; these read GDEGKGK and GHT. Asp-13 functions as the Proton acceptor in the catalytic mechanism. Mg(2+)-binding residues include Asp-13 and Gly-40. IMP contacts are provided by residues 13–16, 38–41, Thr-130, Arg-144, Gln-225, Thr-240, and Arg-304; these read DEGK and NAGH. His-41 serves as the catalytic Proton donor. 300-306 provides a ligand contact to substrate; sequence ATTGRPR. GTP-binding positions include Arg-306, 332–334, and 415–417; these read KLD and SVG.

Belongs to the adenylosuccinate synthetase family. In terms of assembly, homodimer. The cofactor is Mg(2+).

Its subcellular location is the cytoplasm. It carries out the reaction IMP + L-aspartate + GTP = N(6)-(1,2-dicarboxyethyl)-AMP + GDP + phosphate + 2 H(+). The protein operates within purine metabolism; AMP biosynthesis via de novo pathway; AMP from IMP: step 1/2. In terms of biological role, plays an important role in the de novo pathway of purine nucleotide biosynthesis. Catalyzes the first committed step in the biosynthesis of AMP from IMP. This is Adenylosuccinate synthetase from Lawsonia intracellularis (strain PHE/MN1-00).